The chain runs to 245 residues: Probable phosphatase PMI1003 (245 aa).

9 residues coordinate Zn(2+): His7, His9, His15, His40, Glu73, His101, His131, Asp192, and His194.

The protein belongs to the PHP family. As to quaternary structure, homotrimer. Requires Zn(2+) as cofactor.

The sequence is that of Probable phosphatase PMI1003 from Proteus mirabilis (strain HI4320).